Here is a 560-residue protein sequence, read N- to C-terminus: MFS siderochrome iron transporter 1 (560 aa).

N-linked (GlcNAc...) asparagine glycosylation is present at Asn-29. A run of 11 helical transmembrane segments spans residues 53-73 (LWLT…LVSV), 90-110 (LLAS…LTLA), 115-135 (VWGR…ALIM), 146-166 (VAAH…VDVM), 177-194 (MIMF…TFAG), 211-231 (FGAF…IMLF), 264-284 (VVGI…FSIV), 291-311 (WATG…AIFL), 331-351 (PTII…LLTI), 354-374 (AGYV…GIGL), and 379-399 (FKWA…LLIP). N-linked (GlcNAc...) asparagine glycosylation is present at Asn-404. A run of 3 helical transmembrane segments spans residues 407–427 (IGAV…FSVC), 441–461 (VAVV…VGLA), and 522–542 (VIAG…WRNV).

It belongs to the major facilitator superfamily.

Its subcellular location is the membrane. Major facilitator transporter involved in siderophore transport. This is MFS siderochrome iron transporter 1 from Ajellomyces capsulatus (Darling's disease fungus).